Consider the following 579-residue polypeptide: Alpha-longipinene synthase (579 aa).

Mg(2+) is bound by residues D332, D336, D476, and N484. The DDXXD motif signature appears at D332–D336.

Belongs to the terpene synthase family. Tpsd subfamily. Requires Mg(2+) as cofactor. It depends on Mn(2+) as a cofactor.

It catalyses the reaction (2E,6E)-farnesyl diphosphate = alpha-longipinene + diphosphate. The protein operates within sesquiterpene biosynthesis. It functions in the pathway terpene metabolism; oleoresin biosynthesis. Terpene synthase (TPS) involved in the biosynthesis of sesquiterpene natural products included in conifer oleoresin secretions and volatile emissions; these compounds contribute to biotic and abiotic stress defense against herbivores and pathogens. Catalyzes the conversion of (2E,6E)-farnesyl diphosphate (FPP) to alpha-longipinene. The protein is Alpha-longipinene synthase of Picea sitchensis (Sitka spruce).